The following is a 127-amino-acid chain: Holo-[acyl-carrier-protein] synthase (127 aa).

2 residues coordinate Mg(2+): aspartate 9 and glutamate 58.

This sequence belongs to the P-Pant transferase superfamily. AcpS family. Mg(2+) serves as cofactor.

The protein localises to the cytoplasm. The catalysed reaction is apo-[ACP] + CoA = holo-[ACP] + adenosine 3',5'-bisphosphate + H(+). Its function is as follows. Transfers the 4'-phosphopantetheine moiety from coenzyme A to a Ser of acyl-carrier-protein. The polypeptide is Holo-[acyl-carrier-protein] synthase (Shewanella baltica (strain OS195)).